We begin with the raw amino-acid sequence, 88 residues long: Small integral membrane protein 13 (88 aa).

The helical transmembrane segment at 10–30 (LVFVATLLIVLLLMVCGWYFV) threads the bilayer. Polar residues predominate over residues 48-61 (TGSQEGDNEQPSGS). The disordered stretch occupies residues 48–88 (TGSQEGDNEQPSGSETEEDPSASPQKIRSARQRRPPVDAGH). S59 and S61 each carry phosphoserine. The residue at position 63 (T63) is a Phosphothreonine. At S70 the chain carries Phosphoserine.

This sequence belongs to the SMIM13 family.

The protein resides in the membrane. In Mus musculus (Mouse), this protein is Small integral membrane protein 13 (Smim13).